Consider the following 118-residue polypeptide: Small ribosomal subunit protein mS41 (118 aa).

Residues Met-1–Phe-24 constitute a mitochondrion transit peptide.

The protein belongs to the mitochondrion-specific ribosomal protein mS41 family.

It is found in the mitochondrion. Its function is as follows. Involved in telomere length regulation. The polypeptide is Small ribosomal subunit protein mS41 (FYV4) (Yarrowia lipolytica (strain CLIB 122 / E 150) (Yeast)).